A 516-amino-acid chain; its full sequence is Histidine ammonia-lyase (516 aa).

Residues 143–145 (ASG) constitute a cross-link (5-imidazolinone (Ala-Gly)). Residue Ser-144 is modified to 2,3-didehydroalanine (Ser).

It belongs to the PAL/histidase family. In terms of processing, contains an active site 4-methylidene-imidazol-5-one (MIO), which is formed autocatalytically by cyclization and dehydration of residues Ala-Ser-Gly.

The protein resides in the cytoplasm. The catalysed reaction is L-histidine = trans-urocanate + NH4(+). The protein operates within amino-acid degradation; L-histidine degradation into L-glutamate; N-formimidoyl-L-glutamate from L-histidine: step 1/3. The protein is Histidine ammonia-lyase of Koribacter versatilis (strain Ellin345).